Here is a 149-residue protein sequence, read N- to C-terminus: Small ribosomal subunit protein bS6 (149 aa).

Residues 93-149 form a disordered region; the sequence is VGKHEEGPSAMMQKRDRDDRPRRDGDRPDRGGFGDRGPRPDRGDRDDRPRRPREDRA. A compositionally biased stretch (basic and acidic residues) spans 94–149; that stretch reads GKHEEGPSAMMQKRDRDDRPRRDGDRPDRGGFGDRGPRPDRGDRDDRPRRPREDRA.

This sequence belongs to the bacterial ribosomal protein bS6 family.

In terms of biological role, binds together with bS18 to 16S ribosomal RNA. This is Small ribosomal subunit protein bS6 from Rhizobium meliloti (strain 1021) (Ensifer meliloti).